A 238-amino-acid chain; its full sequence is Ribosomal RNA small subunit methyltransferase G (238 aa).

S-adenosyl-L-methionine contacts are provided by residues glycine 79, phenylalanine 84, 102-104, 130-131, and arginine 149; these read EAT and IE.

The protein belongs to the methyltransferase superfamily. RNA methyltransferase RsmG family.

The protein resides in the cytoplasm. Functionally, specifically methylates the N7 position of a guanine in 16S rRNA. This is Ribosomal RNA small subunit methyltransferase G from Chloroflexus aggregans (strain MD-66 / DSM 9485).